Here is a 255-residue protein sequence, read N- to C-terminus: AA9 family lytic polysaccharide monooxygenase D (255 aa).

A signal peptide spans 1–19 (MYRTLGSIALLAGGAAAHG). Residues histidine 18 and histidine 92 each coordinate Cu(2+). 2 disulfide bridges follow: cysteine 65/cysteine 189 and cysteine 104/cysteine 111. An N-linked (GlcNAc...) asparagine glycan is attached at asparagine 152. Residues histidine 178 and glutamine 184 each coordinate O2. Residue tyrosine 186 coordinates Cu(2+). Asparagine 220 carries N-linked (GlcNAc...) asparagine glycosylation.

The protein belongs to the polysaccharide monooxygenase AA9 family. It depends on Cu(2+) as a cofactor.

The protein localises to the secreted. The enzyme catalyses [(1-&gt;4)-beta-D-glucosyl]n+m + reduced acceptor + O2 = 4-dehydro-beta-D-glucosyl-[(1-&gt;4)-beta-D-glucosyl]n-1 + [(1-&gt;4)-beta-D-glucosyl]m + acceptor + H2O.. Its function is as follows. Lytic polysaccharide monooxygenase (LPMO) that depolymerizes crystalline and amorphous polysaccharides via the oxidation of scissile alpha- or beta-(1-4)-glycosidic bonds, yielding specifically C1 oxidation product. Catalysis by LPMOs requires the reduction of the active-site copper from Cu(II) to Cu(I) by a reducing agent and H(2)O(2) or O(2) as a cosubstrate. Is active on regenerated amorphous cellulose (RAC) in the presence of ascorbic acid or 3-methylcatechol. Also acts on phosphoric acid swollen cellulose (PASC) as a substrate. The sequence is that of AA9 family lytic polysaccharide monooxygenase D from Thermothelomyces thermophilus (strain ATCC 42464 / BCRC 31852 / DSM 1799) (Sporotrichum thermophile).